The sequence spans 341 residues: Ketol-acid reductoisomerase (NADP(+)) (341 aa).

The KARI N-terminal Rossmann domain occupies 3-184 (LKVYYDKDCD…GGGRSGIIET (182 aa)). Residues 26–29 (FGSQ), Ser-54, and 84–87 (DELQ) each bind NADP(+). His-109 is a catalytic residue. Residue Gly-135 coordinates NADP(+). Positions 185-330 (TFKDETETDL…GRLRAMMPWI (146 aa)) constitute a KARI C-terminal knotted domain. Positions 193, 197, 229, and 233 each coordinate Mg(2+). Ser-254 serves as a coordination point for substrate.

Belongs to the ketol-acid reductoisomerase family. The cofactor is Mg(2+).

It carries out the reaction (2R)-2,3-dihydroxy-3-methylbutanoate + NADP(+) = (2S)-2-acetolactate + NADPH + H(+). The enzyme catalyses (2R,3R)-2,3-dihydroxy-3-methylpentanoate + NADP(+) = (S)-2-ethyl-2-hydroxy-3-oxobutanoate + NADPH + H(+). Its pathway is amino-acid biosynthesis; L-isoleucine biosynthesis; L-isoleucine from 2-oxobutanoate: step 2/4. It participates in amino-acid biosynthesis; L-valine biosynthesis; L-valine from pyruvate: step 2/4. Its function is as follows. Involved in the biosynthesis of branched-chain amino acids (BCAA). Catalyzes an alkyl-migration followed by a ketol-acid reduction of (S)-2-acetolactate (S2AL) to yield (R)-2,3-dihydroxy-isovalerate. In the isomerase reaction, S2AL is rearranged via a Mg-dependent methyl migration to produce 3-hydroxy-3-methyl-2-ketobutyrate (HMKB). In the reductase reaction, this 2-ketoacid undergoes a metal-dependent reduction by NADPH to yield (R)-2,3-dihydroxy-isovalerate. In Helicobacter hepaticus (strain ATCC 51449 / 3B1), this protein is Ketol-acid reductoisomerase (NADP(+)).